A 160-amino-acid chain; its full sequence is Ribosomal RNA large subunit methyltransferase H (160 aa).

S-adenosyl-L-methionine is bound by residues leucine 77, glycine 109, and 128 to 133; that span reads FSRLTF.

Belongs to the RNA methyltransferase RlmH family. Homodimer.

It is found in the cytoplasm. The enzyme catalyses pseudouridine(1915) in 23S rRNA + S-adenosyl-L-methionine = N(3)-methylpseudouridine(1915) in 23S rRNA + S-adenosyl-L-homocysteine + H(+). Functionally, specifically methylates the pseudouridine at position 1915 (m3Psi1915) in 23S rRNA. The sequence is that of Ribosomal RNA large subunit methyltransferase H from Desulfitobacterium hafniense (strain Y51).